A 159-amino-acid polypeptide reads, in one-letter code: Ribosome maturation factor RimP (159 aa).

Belongs to the RimP family.

It localises to the cytoplasm. In terms of biological role, required for maturation of 30S ribosomal subunits. The chain is Ribosome maturation factor RimP from Halothermothrix orenii (strain H 168 / OCM 544 / DSM 9562).